A 759-amino-acid polypeptide reads, in one-letter code: Short transient receptor potential channel 1 (759 aa).

The disordered stretch occupies residues 1–30; sequence MMAALYPSTDLSGVSSSSLPSSPSSSSPNE. Over 1–311 the chain is Cytoplasmic; that stretch reads MMAALYPSTD…FGQMSGYRRK (311 aa). The segment covering 15–28 has biased composition (low complexity); it reads SSSSLPSSPSSSSP. ANK repeat units follow at residues 46–75, 83–109, and 124–146; these read LNEKLFLLACDKGDYYMVKKILEENSSGDL, LGRNAVTITIENESLDILQLLLDYGCQ, and MDVAPVILAAHRNNYEILTMLLK. The Zn(2+) site is built by His155, Cys159, Cys161, and Cys164. Positions 312-345 form an intramembrane region, discontinuously helical; that stretch reads PTCKKIMTVLTVGIFWPVLSLCYLIAPKSQFGRI. Topologically, residues 346–352 are cytoplasmic; the sequence is IHTPFMK. A helical membrane pass occupies residues 353-370; that stretch reads FIIHGASYFTFLLLLNLY. The Extracellular segment spans residues 371-388; it reads SLVYNEDKKNTMGPALER. Residues 389–405 form a helical membrane-spanning segment; the sequence is IDYLLILWIIGMIWSDI. At 406 to 421 the chain is on the cytoplasmic side; sequence KRLWYEGLEDFLEESR. The chain crosses the membrane as a helical span at residues 422-441; that stretch reads NQLSFVMNSLYLATFALKVV. The Extracellular segment spans residues 442 to 462; that stretch reads AHNKFHDFADRKDWDAFHPTL. Residues 463–483 form a helical membrane-spanning segment; it reads VAEGLFAFANVLSYLRLFFMY. At 484 to 502 the chain is on the cytoplasmic side; sequence TTSSILGPLQISMGQMLQD. A helical membrane pass occupies residues 503–524; that stretch reads FGKFLGMFLLVLFSFTIGLTQL. Residues 525–589 lie on the Extracellular side of the membrane; it reads YDKGYTSKEQ…GEELQSFVGA (65 aa). Cysteines 537 and 542 form a disulfide. The helical transmembrane segment at 590 to 610 threads the bilayer; the sequence is VIVGTYNVVVVIVLTKLLVAM. Residues 611–759 lie on the Cytoplasmic side of the membrane; sequence LHKSFQLIAN…SKYAMFYPKN (149 aa).

It belongs to the transient receptor (TC 1.A.4) family. STrpC subfamily. TRPC1 sub-subfamily. As to quaternary structure, heterotetramer with TRPC4 and/or TRPC5. Forms a heteromeric ion channel with TRPC4, with a 1:3 TRPC1:TRPC4 stoichiometry. Unlike other TRP channel proteins, does not form a homomeric channel. Interacts with TRPC4AP. Interacts with ITPR3. Interacts with MX1 and RNF24. Interacts with FKBP4. Interacts with PLSCR1. Interacts with PKD2L2. Forms a heterotetramer with PKD2 with a 2:2 stoichiometry; has distinct channel properties separate from PKD2 or TRPC1 homomers alone. Activation of PRKCA induces phosphorylation of TRPC1 and subsequent Ca2+ entry into cells. In terms of tissue distribution, expressed in brain, hippocampus, amygdala, Purkinje cells and single neurons in the cortex and striatum.

The protein resides in the cell membrane. It carries out the reaction Ca(2+)(in) = Ca(2+)(out). It catalyses the reaction Na(+)(in) = Na(+)(out). The catalysed reaction is Li(+)(in) = Li(+)(out). The enzyme catalyses Cs(+)(in) = Cs(+)(out). With respect to regulation, may be operated by a phosphatidylinositol second messenger system activated by receptor tyrosine kinases or G-protein coupled receptors. Also activated by intracellular calcium store depletion. In terms of biological role, forms a receptor-activated non-selective calcium permeant cation channel. Forms a heteromeric ion channel with TRPC4 or TRPC5 that has reduced calcium permeability compared to the homomeric TRPC4 or TRPC5 channel. Also permeable to monovalent ions including sodium, lithium and cesium ions. This is Short transient receptor potential channel 1 (Trpc1) from Rattus norvegicus (Rat).